Here is a 133-residue protein sequence, read N- to C-terminus: UPF0102 protein AB57_1130 (133 aa).

This sequence belongs to the UPF0102 family.

The chain is UPF0102 protein AB57_1130 from Acinetobacter baumannii (strain AB0057).